A 534-amino-acid polypeptide reads, in one-letter code: Probable alpha-galactosidase A (534 aa).

The signal sequence occupies residues 1-25 (MRLITRWIPLANALASTMPVQVVAS). C47 and C79 are oxidised to a cystine. N50, N88, N94, and N124 each carry an N-linked (GlcNAc...) asparagine glycan. The cysteines at positions 127 and 157 are disulfide-linked. The active-site Nucleophile is D155. N-linked (GlcNAc...) asparagine glycosylation is present at N204. The Proton donor role is filled by D213. The Ricin B-type lectin domain occupies 413 to 534 (CSQVIPTGLI…GLPAGVHVAL (122 aa)). Cysteines 430 and 443 form a disulfide. A glycan (N-linked (GlcNAc...) asparagine) is linked at N444. A disulfide bond links C468 and C481.

Belongs to the glycosyl hydrolase 27 family.

The protein localises to the secreted. The enzyme catalyses Hydrolysis of terminal, non-reducing alpha-D-galactose residues in alpha-D-galactosides, including galactose oligosaccharides, galactomannans and galactolipids.. Hydrolyzes a variety of simple alpha-D-galactoside as well as more complex molecules such as oligosaccharides and polysaccharides. The chain is Probable alpha-galactosidase A (aglA) from Aspergillus flavus (strain ATCC 200026 / FGSC A1120 / IAM 13836 / NRRL 3357 / JCM 12722 / SRRC 167).